The primary structure comprises 170 residues: MKTQRDSPSLGRWSLVLLLLGLVMPLAIVAQVLSYQEAVLRAIDGINQRSSDANLYRLLDLDPRPTMDGDPDTPKPVSFTVKETVCPRTTQQSPEDCDFKKDGLVKRCMGTVTLNQARDSFDISCDKDNRRFALPGNFFRKAREKIGKEFKRIVQRIKDFLQHLVPRTEA.

Positions 1 to 30 (MKTQRDSPSLGRWSLVLLLLGLVMPLAIVA) are cleaved as a signal peptide. Residues 31–131 (QVLSYQEAVL…DISCDKDNRR (101 aa)) constitute a propeptide, cathelin-like domain (CLD). 2 disulfide bridges follow: Cys86–Cys97 and Cys108–Cys125. The segment at 150–162 (FKRIVQRIKDFLQ) is active core.

This sequence belongs to the cathelicidin family. In terms of assembly, monomer, homodimer or homotrimer (in vitro). Oligomerizes as tetra- or hexamer in solution (in vitro). Proteolytically cleaved by proteinase PRTN3 into antibacterial peptide LL-37. Proteolytically cleaved by cathepsin CTSG and neutrophil elastase ELANE. In terms of processing, resistant to proteolytic degradation in solution, and when bound to both zwitterionic (mimicking mammalian membranes) and negatively charged membranes (mimicking bacterial membranes). Post-translationally, after secretion onto the skin surface, the CAMP gene product is processed by a serine protease-dependent mechanism into multiple novel antimicrobial peptides distinct from and shorter than cathelicidin LL-37. These peptides show enhanced antimicrobial action, acquiring the ability to kill skin pathogens such as S.aureus, E.coli and C.albicans. These peptides have lost the ability to stimulate CXCL8/IL8 release from keratinocytes. The peptides act synergistically, killing bacteria at lower concentrations when present together, and maintain activity at increased salt condition.

It is found in the secreted. The protein localises to the vesicle. In terms of biological role, antimicrobial protein that is an integral component of the innate immune system. Binds to bacterial lipopolysaccharides (LPS). Acts via neutrophil N-formyl peptide receptors to enhance the release of CXCL2. Postsecretory processing generates multiple cathelicidin antimicrobial peptides with various lengths which act as a topical antimicrobial defense in sweat on skin. The unprocessed precursor form, cathelicidin antimicrobial peptide, inhibits the growth of Gram-negative E.coli and E.aerogenes with efficiencies comparable to that of the mature peptide LL-37 (in vitro). Its function is as follows. Antimicrobial peptide that is an integral component of the innate immune system. Binds to bacterial lipopolysaccharides (LPS). Causes membrane permeabilization by forming transmembrane pores (in vitro). Causes lysis of E.coli. Exhibits antimicrobial activity against Gram-negative bacteria such as P.aeruginosa, S.typhimurium, E.aerogenes, E.coli and P.syringae, Gram-positive bacteria such as L.monocytogenes, S.epidermidis, S.pyogenes and S.aureus, as well as vancomycin-resistant enterococci (in vitro). Exhibits antimicrobial activity against methicillin-resistant S.aureus, P.mirabilis, and C.albicans in low-salt media, but not in media containing 100 mM NaCl (in vitro). Forms chiral supramolecular assemblies with quinolone signal (PQS) molecules of P.aeruginosa, which may lead to interference of bacterial quorum signaling and perturbance of bacterial biofilm formation. May form supramolecular fiber-like assemblies on bacterial membranes. Induces cytokine and chemokine producation as well as TNF/TNFA and CSF2/GMCSF production in normal human keratinocytes. Exhibits hemolytic activity against red blood cells. Functionally, exhibits antimicrobial activity against E.coli and B.megaterium (in vitro). This Nomascus concolor (Black crested gibbon) protein is Cathelicidin antimicrobial peptide.